Here is an 830-residue protein sequence, read N- to C-terminus: GPI ethanolamine phosphate transferase 2 (830 aa).

An N-terminal signal peptide occupies residues 1–32 (MNLKQFTCLSCAQLLAILLFIFAFFPRKIVLT). The Lumenal portion of the chain corresponds to 33–321 (GISKQDPDQD…QYLETVQQID (289 aa)). N-linked (GlcNAc...) asparagine glycans are attached at residues asparagine 145, asparagine 185, and asparagine 298. The chain crosses the membrane as a helical span at residues 322 to 342 (IVPTIAALFGMPIPMNSVGII). The Cytoplasmic segment spans residues 343 to 405 (IPDFLQLLPN…TKSATNYNYP (63 aa)). A helical transmembrane segment spans residues 406–426 (LLTLAFVGFLIITIIAIYVLL). The Lumenal portion of the chain corresponds to 427 to 439 (RYSGPDFWQLRVS). A helical transmembrane segment spans residues 440–460 (SLSVLLVSIILGVSTFASSFI). Residues 461–469 (EEEHQLWWW) are Cytoplasmic-facing. Residues 470–490 (IVTAFSAVPLFVYRLNVLIIV) form a helical membrane-spanning segment. Residues 491–533 (RWFIMMACVRSIKFWNNSGQKFIYSNVMSNLLNQNPSWKWCLN) lie on the Lumenal side of the membrane. An N-linked (GlcNAc...) asparagine glycan is attached at asparagine 506. A helical membrane pass occupies residues 534-554 (MLTFLVLIMASAGFQVLHFIV). The Cytoplasmic segment spans residues 555–598 (TTILVGLCFTYKISWEIVNGNQAEIPLFMHDLLAKIDFAPTESN). The chain crosses the membrane as a helical span at residues 599 to 619 (LIVLARVFFQAWAIVVISRLV). Topologically, residues 620–651 (LTKLKVLNKNYLIKDMKVYITILLMFQTSSQN) are lumenal. A helical transmembrane segment spans residues 652–672 (IGQFLVFQILESQIFYFFQNI). Over 673-682 (PTASLTSTSK) the chain is Cytoplasmic. A helical membrane pass occupies residues 683 to 703 (IYFSNLVSLILQNFTFFQFGG). At 704–724 (TNSISTIDLGNAYHGVSSDYN) the chain is on the lumenal side. A helical membrane pass occupies residues 725 to 745 (IYVVGILMSVANFAPAIYWSM). Topologically, residues 746–768 (LPWSINYASIPAQVKLQTFIRSK) are cytoplasmic. A helical transmembrane segment spans residues 769-789 (LPAFTYHCIFGTCLMTACVVL). The Lumenal segment spans residues 790–805 (RFHLFIWSVFSPKLCY). The helical transmembrane segment at 806-826 (FLGWNFVMGLLNGWLPELALL) threads the bilayer. Residues 827 to 830 (CALD) are Cytoplasmic-facing.

This sequence belongs to the PIGG/PIGN/PIGO family. PIGG subfamily. Post-translationally, N-glycosylated.

Its subcellular location is the endoplasmic reticulum membrane. It participates in glycolipid biosynthesis; glycosylphosphatidylinositol-anchor biosynthesis. Functionally, ethanolamine phosphate transferase involved in glycosylphosphatidylinositol-anchor biosynthesis. Transfers ethanolamine phosphate to the GPI second mannose. Although not essential, addition of ethanolamine phosphate to the second mannose plays an important role in cell separation via the GPI-based modification of daughter-specific proteins. In Saccharomyces cerevisiae (strain ATCC 204508 / S288c) (Baker's yeast), this protein is GPI ethanolamine phosphate transferase 2 (LAS21).